The following is a 261-amino-acid chain: Kallikrein 1-related peptidase b8 (261 aa).

An N-terminal signal peptide occupies residues 1-18 (MRFLILFLALSLGGIDAA). Residues 19–24 (PPLQSR) constitute a propeptide, activation peptide. Residues 25–258 (VVGGFNCEKN…FNSWIKDTMT (234 aa)) form the Peptidase S1 domain. Cystine bridges form between C31–C173, C50–C66, C152–C219, C184–C198, and C209–C234. H65 functions as the Charge relay system in the catalytic mechanism. An N-linked (GlcNAc...) asparagine glycan is attached at N102. The active-site Charge relay system is D120. The active-site Charge relay system is the S213.

This sequence belongs to the peptidase S1 family. Kallikrein subfamily.

It catalyses the reaction Preferential cleavage of Arg-|-Xaa bonds in small molecule substrates. Highly selective action to release kallidin (lysyl-bradykinin) from kininogen involves hydrolysis of Met-|-Xaa or Leu-|-Xaa.. Glandular kallikreins cleave Met-Lys and Arg-Ser bonds in kininogen to release Lys-bradykinin. This Mus musculus (Mouse) protein is Kallikrein 1-related peptidase b8 (Klk1b8).